A 400-amino-acid polypeptide reads, in one-letter code: Laminin subunit B (400 aa).

Laminin EGF-like domains are found at residues 1 to 5 (EGCKP), 6 to 53 (CECD…GCKS), and 54 to 100 (CTCN…QCIP). 8 disulfides stabilise this stretch: Cys-6–Cys-18, Cys-8–Cys-25, Cys-27–Cys-36, Cys-39–Cys-51, Cys-54–Cys-66, Cys-56–Cys-73, Cys-75–Cys-84, and Cys-87–Cys-98. Positions 101-400 (CGECFDNWDK…AEAKNNAHEA (300 aa)) are domain II and I. Positions 140–235 (KEFEELEQVL…RENALEIQEQ (96 aa)) form a coiled coil. N-linked (GlcNAc...) asparagine glycosylation is found at Asn-160, Asn-175, Asn-216, Asn-266, Asn-283, Asn-310, and Asn-356. A coiled-coil region spans residues 353 to 400 (EAKNTSRKAEELIKSKYRSTSSTLSELENSNKQCKQATAEAKNNAHEA). The tract at residues 369–400 (YRSTSSTLSELENSNKQCKQATAEAKNNAHEA) is disordered. The segment covering 371–383 (STSSTLSELENSN) has biased composition (low complexity).

In terms of assembly, laminin is a complex glycoprotein, consisting of three different polypeptide chains (alpha, beta, gamma), which are bound to each other by disulfide bonds into a cross-shaped molecule comprising one long and three short arms with globules at each end. Individual glial and muscle cells.

The protein localises to the secreted. It localises to the extracellular space. Its subcellular location is the extracellular matrix. In terms of biological role, binding to cells via a high affinity receptor, laminin is thought to mediate the attachment, migration and organization of cells into tissues during embryonic development by interacting with other extracellular matrix components. The sequence is that of Laminin subunit B from Hirudo medicinalis (Medicinal leech).